The chain runs to 160 residues: Sperm acrosome-associated protein 5 (160 aa).

A signal peptide spans 1–21 (MKVCSIVVVILAVLLIAKLDA). One can recognise a C-type lysozyme domain in the interval 22–150 (KIYERCELAK…SEWLKGCSVR (129 aa)). 4 disulfides stabilise this stretch: cysteine 27–cysteine 147, cysteine 51–cysteine 135, cysteine 85–cysteine 100, and cysteine 96–cysteine 114. The active site involves glutamate 56.

This sequence belongs to the glycosyl hydrolase 22 family.

It localises to the secreted. It carries out the reaction Hydrolysis of (1-&gt;4)-beta-linkages between N-acetylmuramic acid and N-acetyl-D-glucosamine residues in a peptidoglycan and between N-acetyl-D-glucosamine residues in chitodextrins.. The polypeptide is Sperm acrosome-associated protein 5 (Spaca5) (Mus musculus (Mouse)).